A 299-amino-acid polypeptide reads, in one-letter code: Large ribosomal subunit protein uL18 (299 aa).

It belongs to the universal ribosomal protein uL18 family. Component of the large ribosomal subunit (LSU).

The protein localises to the cytoplasm. The protein resides in the nucleus. Component of the ribosome, a large ribonucleoprotein complex responsible for the synthesis of proteins in the cell. The small ribosomal subunit (SSU) binds messenger RNAs (mRNAs) and translates the encoded message by selecting cognate aminoacyl-transfer RNA (tRNA) molecules. The large subunit (LSU) contains the ribosomal catalytic site termed the peptidyl transferase center (PTC), which catalyzes the formation of peptide bonds, thereby polymerizing the amino acids delivered by tRNAs into a polypeptide chain. The nascent polypeptides leave the ribosome through a tunnel in the LSU and interact with protein factors that function in enzymatic processing, targeting, and the membrane insertion of nascent chains at the exit of the ribosomal tunnel. This is Large ribosomal subunit protein uL18 (RpL5) from Bombyx mori (Silk moth).